Reading from the N-terminus, the 592-residue chain is ATP-dependent lipid A-core flippase (592 aa).

6 consecutive transmembrane segments (helical) span residues 31–51 (LSSF…EGII), 76–96 (AMLV…TYFL), 134–154 (AVIF…ITLV), 161–181 (LALL…VAVI), 261–281 (VTQF…MVQA), and 288–308 (VGGF…LKHL). Positions 35 to 317 (ILAMVAMGVV…LTDVNQPMQR (283 aa)) constitute an ABC transmembrane type-1 domain. One can recognise an ABC transporter domain in the interval 349–587 (LRFEHVTFRY…DGLYAGLHRI (239 aa)). Position 383-390 (383-390 (GPSGSGKT)) interacts with ATP.

This sequence belongs to the ABC transporter superfamily. Lipid exporter (TC 3.A.1.106) family. In terms of assembly, homodimer.

Its subcellular location is the cell inner membrane. It carries out the reaction ATP + H2O + lipid A-core oligosaccharideSide 1 = ADP + phosphate + lipid A-core oligosaccharideSide 2.. In terms of biological role, involved in lipopolysaccharide (LPS) biosynthesis. Translocates lipid A-core from the inner to the outer leaflet of the inner membrane. Transmembrane domains (TMD) form a pore in the inner membrane and the ATP-binding domain (NBD) is responsible for energy generation. The polypeptide is ATP-dependent lipid A-core flippase (Ralstonia nicotianae (strain ATCC BAA-1114 / GMI1000) (Ralstonia solanacearum)).